A 317-amino-acid chain; its full sequence is MDCYLLLLLLLLGLAGQGSADSHPEVLQAPVGSSILVQCHYRLQDVRALKVWCQFLQEGCHPLVTSAVDRRAPGNGRIFLTDLGGGLLQVEMVTLQEEDTGEYGCVVEGAAGPQTLHRVSLLVLPPVPGPREGEEAEDEKETYRIGTGSLLEDPSLDPSASAGPHEFRRRENSIPLIWGAVLLLALVVVAVVIFAVMARKKGNRLVVCGPSQSTGVPGMDPPSAAHRSSDSGLPSDIPHVRLDSPPSFDSIYTGSSLDPPSSEPPAPPSQPPLPPKVLMSSKSVTYATVVFPGGDKGKIASCEPVQDPPNSQTPPSK.

An N-terminal signal peptide occupies residues Met1–Ala20. The region spanning Asp21 to Leu122 is the Ig-like V-type domain. Topologically, residues Asp21–Pro175 are extracellular. Intrachain disulfides connect Cys39–Cys105 and Cys53–Cys60. The disordered stretch occupies residues Thr147–Glu166. A helical membrane pass occupies residues Leu176 to Val196. Over Met197 to Lys317 the chain is Cytoplasmic. Cys208 is lipidated: S-palmitoyl cysteine. Positions Gln212–Leu278 are disordered. Residues Ser261–Pro275 show a composition bias toward pro residues. Ser283 carries the post-translational modification Phosphoserine. Positions Val284–Val289 match the ITIM motif. Residues Asp295–Lys317 form a disordered region. The span at Pro308–Lys317 shows a compositional bias: polar residues.

As to quaternary structure, when phosphorylated, interacts with PTPN11. When phosphorylated, interacts with PTPN6. Post-translationally, phosphorylated on tyrosine residues. Highly expressed in bone marrow leukocytes, splenic megakaryocytes and platelets. Detected in brain, liver and in peritoneal monocytes.

The protein localises to the cell membrane. Its subcellular location is the cytoplasm. In terms of biological role, cell surface receptor that may play a role in the innate and adaptive immune response. The sequence is that of Trem-like transcript 1 protein (Treml1) from Mus musculus (Mouse).